Here is a 613-residue protein sequence, read N- to C-terminus: MCGWPLLVLWALLPATAAGSPGRSYPHRVVLDPEGKYWLHWGRQGERLAFRLEVRTNGYVGFGFSPTGSMAAADIVVGGVAHGRPYLQDYFTNADRELEKDAQQDYHLDYAMENSTHTVIEFSRELHTCDVNDKSLTDSTVRVIWAYHHDDPGESGPKYHDLNRGTRSLRLLNPEKANVVSTVLPYFDLVNQNVPIPNKGTTYWCQMFKIPTFQEKHHVIKVEPIIERGHENLVHHILVYQCSSNFNDSVLDFGHECYHPNMPDAFLTCETVILAWGIGGEGFTYPPHVGLSLGMPLDPRYVLLEVHYDNPARRKGLIDSSGLRVFHTTDIRRYDAGVIEAGLWVSLFHTIPPGMPEFHSEGHCTLECLEEALGAEKPSGIHVFAVLLHAHLAGKGIRLRHFRKGEEMKLLAYDDDYDFNFQEFQYLREEQTILPGDNLITECRYNTKDRAVMTWGGLSTRNEMCLSYLLYYPRVNLTRCSSIPDIMEQLQFIGVKEIYRPVTTWPFIIKSPKQYRNLSFMDAMNKFKWTKKEGLSFNKLVLSLPVNVRCSKTDNAEWSIQGMTAIPPDIKRPYEAEPLVCEKAASPPLHGIFSLRLLTCALLLGSMLSSQGL.

The signal sequence occupies residues 1-19; that stretch reads MCGWPLLVLWALLPATAAG. Over 20 to 587 the chain is Lumenal; the sequence is SPGRSYPHRV…PLVCEKAASP (568 aa). One can recognise a DOMON domain in the interval 35 to 148; that stretch reads GKYWLHWGRQ…STVRVIWAYH (114 aa). N114 carries N-linked (GlcNAc...) asparagine glycosylation. The active site involves Y203. 2 disulfide bridges follow: C205/C257 and C242/C269. Residues H235 and H236 each contribute to the Cu cation site. N-linked (GlcNAc...) asparagine glycosylation occurs at N247. Positions 307, 389, 391, and 464 each coordinate Cu cation. 3 disulfide bridges follow: C364/C480, C368/C550, and C443/C465. The active site involves H389. 2 N-linked (GlcNAc...) asparagine glycosylation sites follow: N476 and N517. Residues 588–608 form a helical membrane-spanning segment; that stretch reads PLHGIFSLRLLTCALLLGSML.

This sequence belongs to the copper type II ascorbate-dependent monooxygenase family. Cu(2+) is required as a cofactor. In terms of processing, N-glycosylated. In terms of tissue distribution, broadly exprressed, with highest levels in salivary gland and ovary.

The protein localises to the endoplasmic reticulum membrane. This is DBH-like monooxygenase protein 1 (Moxd1) from Mus musculus (Mouse).